The primary structure comprises 616 residues: Chaperone protein HscA (616 aa).

It belongs to the heat shock protein 70 family.

In terms of biological role, chaperone involved in the maturation of iron-sulfur cluster-containing proteins. Has a low intrinsic ATPase activity which is markedly stimulated by HscB. Involved in the maturation of IscU. This is Chaperone protein HscA from Escherichia coli O6:H1 (strain CFT073 / ATCC 700928 / UPEC).